Reading from the N-terminus, the 309-residue chain is Protein FdhE (309 aa).

It belongs to the FdhE family.

The protein resides in the cytoplasm. Functionally, necessary for formate dehydrogenase activity. In Salmonella choleraesuis (strain SC-B67), this protein is Protein FdhE.